Here is a 781-residue protein sequence, read N- to C-terminus: Chloride channel protein CLC-f (781 aa).

Disordered stretches follow at residues 1–41 (MSSG…QSPA) and 79–98 (RERHNPSSSSAFSAAGEEDG). A compositionally biased stretch (basic and acidic residues) spans 10–20 (NEDRHLLRSTD). 12 consecutive transmembrane segments (helical) span residues 129 to 149 (WALLLIGCLIGVAAGICVAGF), 184 to 204 (ILLIPVTGGVIVGMMHGLLEI), 221 to 241 (FLAGIYPVIKAIQAAVTLGTG), 250 to 270 (SVDIGKSCANGFALMMENNRE), 279 to 299 (GAASGIASGFNAAVAGCFFAI), 314 to 334 (FTTAMIILASVISSTVSNALL), 350 to 370 (AAELPLYLILGMLCGAVSVVF), 388 to 408 (FGLPAIVCPALGGLGAGIIAL), 433 to 453 (APGIWLLAQLAAAKVVATALC), 457 to 477 (GLVGGLYAPSLMIGAAVGAVF), 502 to 522 (ALVGMAATLASMCSVPLTSVL), and 523 to 543 (LLFELTKDYRILLPLMGAVGL). Residues 553-584 (QGKESDSSEGRSTGRGYSSLSPSERKTEGVWR) are disordered. Over residues 575–584 (SERKTEGVWR) the composition is skewed to basic and acidic residues. CBS domains are found at residues 621 to 677 (MSKN…NAST) and 699 to 763 (QERG…EMSR). A helical membrane pass occupies residues 726–746 (QLPVVKRGEVIHKGKRRKLLG).

It belongs to the chloride channel (TC 2.A.49) family. Homodimer.

It localises to the membrane. In terms of biological role, voltage-gated chloride channel. In Arabidopsis thaliana (Mouse-ear cress), this protein is Chloride channel protein CLC-f (CLC-F).